We begin with the raw amino-acid sequence, 457 residues long: Protein unc-93 homolog A (457 aa).

The next 5 membrane-spanning stretches (helical) occupy residues Val8 to Leu28, Ala42 to Ile62, Leu65 to Asn85, Phe86 to Pro106, and Ile140 to Phe160. N-linked (GlcNAc...) asparagine glycosylation occurs at Asn190. Transmembrane regions (helical) follow at residues Thr202 to Leu222, Leu257 to Glu277, Phe291 to Gly311, Ala320 to Trp340, Ala344 to Trp364, and Phe395 to Leu415.

This sequence belongs to the unc-93 family. Expressed in testis, small intestine, spleen, prostate and ovary.

The protein resides in the cell membrane. The protein is Protein unc-93 homolog A (UNC93A) of Homo sapiens (Human).